A 255-amino-acid polypeptide reads, in one-letter code: EEF1A lysine methyltransferase 4 (255 aa).

Trp26 and Tyr30 together coordinate S-adenosyl-L-methionine. Residue Tyr39 is modified to Phosphotyrosine. S-adenosyl-L-methionine is bound by residues Trp41, Gly66, 88–89 (DY), 113–114 (DV), and Lys130. The short motif at 129-134 (EKGTLD) is the Required for methyltransferase activity element.

It belongs to the methyltransferase superfamily.

It carries out the reaction L-lysyl-[protein] + S-adenosyl-L-methionine = N(6)-methyl-L-lysyl-[protein] + S-adenosyl-L-homocysteine + H(+). The catalysed reaction is N(6)-methyl-L-lysyl-[protein] + S-adenosyl-L-methionine = N(6),N(6)-dimethyl-L-lysyl-[protein] + S-adenosyl-L-homocysteine + H(+). It catalyses the reaction N(6),N(6)-dimethyl-L-lysyl-[protein] + S-adenosyl-L-methionine = N(6),N(6),N(6)-trimethyl-L-lysyl-[protein] + S-adenosyl-L-homocysteine + H(+). Functionally, protein-lysine methyltransferase that efficiently catalyzes three successive methylations on 'Lys-36' in eukaryotic translation elongation factor 1 alpha (EEF1A1 or EEF1A2). The polypeptide is EEF1A lysine methyltransferase 4 (Homo sapiens (Human)).